The following is a 221-amino-acid chain: Glycerol metabolism activator (221 aa).

A Response regulatory domain is found at 3-120 (KILIADDHPL…QMTDAIEQIL (118 aa)). D55 is modified (4-aspartylphosphate). The HTH luxR-type domain maps to 149-214 (APELLQALTR…QAILSAGDID (66 aa)). The segment at residues 173-192 (NKQIAYNLDIAETTVKAHVS) is a DNA-binding region (H-T-H motif).

Positive activator for glycerol metabolism. Regulates the expression of qedA in a positive manner and governs the expression of ADH I and ADH IIB. General regulator of quinoprotein ethanol oxidation and affects expression of ADH IIG activity but is not the sole regulator. The sequence is that of Glycerol metabolism activator from Pseudomonas putida (Arthrobacter siderocapsulatus).